Consider the following 535-residue polypeptide: Major glycerophosphoinositol permease GIT3 (535 aa).

Residues 49–69 form a helical membrane-spanning segment; the sequence is VVTSVKANSLWPAFASGAGLF. Asparagine 75 is a glycosylation site (N-linked (GlcNAc...) asparagine). Transmembrane regions (helical) follow at residues 101-121, 137-157, 165-185, 204-224, and 232-252; these read NIASIAFVGTVVGQLGFGYIS, LIFFTLMCAVGSWGVTVQGFF, FFLGVAIGAEYPTSSVIASEF, AMIDSGFVVSAFVPFVLIWIF, and LWRVAIGLGVIPPLSLFFMRL. An N-linked (GlcNAc...) asparagine glycan is attached at asparagine 256. Transmembrane regions (helical) follow at residues 275–295, 324–344, 352–372, 378–398, 419–439, and 455–475; these read WWLIVKFYWFRLTIVSLIWFI, WGWSIVFNLFYIPGAFLGAIS, LTLALGVGIQGVIGIAMSACL, HIAGFVVVFGIFTTFGEFGPG, GIAAAIGKIGAFVGTWVFPAI, and VPFYISSALCLFSACLAIFFC. A glycan (N-linked (GlcNAc...) asparagine) is linked at asparagine 532.

This sequence belongs to the major facilitator superfamily. Sugar transporter (TC 2.A.1.1) family.

The protein resides in the cell membrane. The catalysed reaction is sn-glycerol 3-phosphocholine(out) = sn-glycerol 3-phosphocholine(in). In terms of biological role, glycerophosphodiester transporter that mediates uptake of glycerophosphocholine (GroPCho) with GIT4. GIT3 acts as the major GroPCho permease. Does not possess detectable glycerophosphoinositol (GroPIns) transport activity. The expanded ability to utilize GroPIns and GroPCho results from the organism's pathogenic nature and its need to occupy a variety of environments within its host organism. This possibility is buttressed by the fact that GroPIns and GroPCho are present and abundant in human fluids. The sequence is that of Major glycerophosphoinositol permease GIT3 from Candida albicans (strain SC5314 / ATCC MYA-2876) (Yeast).